The chain runs to 363 residues: Phosphoserine aminotransferase (363 aa).

Arg41 provides a ligand contact to L-glutamate. Residues 75-76 (AS), Trp100, Thr155, Asp175, and Gln198 contribute to the pyridoxal 5'-phosphate site. The residue at position 199 (Lys199) is an N6-(pyridoxal phosphate)lysine. 239 to 240 (NT) lines the pyridoxal 5'-phosphate pocket.

Belongs to the class-V pyridoxal-phosphate-dependent aminotransferase family. SerC subfamily. Homodimer. It depends on pyridoxal 5'-phosphate as a cofactor.

It is found in the cytoplasm. It catalyses the reaction O-phospho-L-serine + 2-oxoglutarate = 3-phosphooxypyruvate + L-glutamate. The catalysed reaction is 4-(phosphooxy)-L-threonine + 2-oxoglutarate = (R)-3-hydroxy-2-oxo-4-phosphooxybutanoate + L-glutamate. It functions in the pathway amino-acid biosynthesis; L-serine biosynthesis; L-serine from 3-phospho-D-glycerate: step 2/3. Catalyzes the reversible conversion of 3-phosphohydroxypyruvate to phosphoserine and of 3-hydroxy-2-oxo-4-phosphonooxybutanoate to phosphohydroxythreonine. This Streptococcus suis (strain 98HAH33) protein is Phosphoserine aminotransferase.